The chain runs to 309 residues: Porphobilinogen deaminase (309 aa).

C241 carries the S-(dipyrrolylmethanemethyl)cysteine modification.

It belongs to the HMBS family. As to quaternary structure, monomer. The cofactor is dipyrromethane.

It catalyses the reaction 4 porphobilinogen + H2O = hydroxymethylbilane + 4 NH4(+). It participates in porphyrin-containing compound metabolism; protoporphyrin-IX biosynthesis; coproporphyrinogen-III from 5-aminolevulinate: step 2/4. In terms of biological role, tetrapolymerization of the monopyrrole PBG into the hydroxymethylbilane pre-uroporphyrinogen in several discrete steps. The protein is Porphobilinogen deaminase of Campylobacter concisus (strain 13826).